Consider the following 270-residue polypeptide: Dehydrodolichyl diphosphate synthase (270 aa).

It belongs to the UPP synthase family.

It is found in the endoplasmic reticulum membrane. Its pathway is protein modification; protein glycosylation. Cis-prenyl transferase that adds multiple copies of isopentenyl pyrophosphate (IPP) to farnesyl pyrophosphate (FPP) to produce dehydrodolichyl diphosphate (Dedol-PP). The sequence is that of Dehydrodolichyl diphosphate synthase (RER2) from Encephalitozoon cuniculi (strain GB-M1) (Microsporidian parasite).